A 378-amino-acid chain; its full sequence is Regulatory protein E2 (378 aa).

The segment at 1–200 (METLCQRLDA…ESIYCPDSVS (200 aa)) is transactivation domain. Low complexity-rich tracts occupy residues 221-230 (TYQTPTTSTP) and 268-278 (NRVNTNNTNNR). A disordered region spans residues 221–281 (TYQTPTTSTP…TNNTNNRQCL (61 aa)). The tract at residues 297–378 (TTPVVHLKGE…VMGHMTGVDM (82 aa)) is DNA-binding domain. Residue lysine 304 forms a Glycyl lysine isopeptide (Lys-Gly) (interchain with G-Cter in SUMO) linkage.

It belongs to the papillomaviridae E2 protein family. Binds DNA as homodimer. Interacts with protein E1; this interaction greatly increases E1 DNA-binding activity. Interacts with protein L1; this interaction enhances E2-dependent replication and transcription activation. Interacts with protein L2; this interaction inhibits E2 transcriptional activity but not DNA replication function E2. Interacts with protein E7; this interaction inhibits E7 oncogenic activity. Interacts with host TAF1; this interaction modulates E2-dependent transcriptional regulation. Interacts with host BRD4; this interaction mediates E2 transcriptional activation function. Additionally, the interaction with host BRD4 on mitotic chromosomes mediates tethering of the viral genome. Interacts with host TOPBP1; this interaction is required for optimal viral DNA replication. Post-translationally, phosphorylated. In terms of processing, sumoylation plays a regulatory role in E2 transcriptional activity.

The protein localises to the host nucleus. In terms of biological role, plays a role in the initiation of viral DNA replication. A dimer of E2 interacts with a dimer of E1 in order to improve specificity of E1 DNA binding activity. Once the complex recognizes and binds DNA at specific sites, the E2 dimer is removed from DNA. E2 also regulates viral transcription through binding to the E2RE response element (5'-ACCNNNNNNGGT-3') present in multiple copies in the regulatory regions of the viral genome. Activates or represses transcription depending on E2RE's position with regards to proximal promoter elements including the TATA-box. Repression occurs by sterically hindering the assembly of the transcription initiation complex. The sequence is that of Regulatory protein E2 from Homo sapiens (Human).